We begin with the raw amino-acid sequence, 208 residues long: ATP synthase subunit b (208 aa).

The span at 1 to 18 (MFVSTAFAQTATESQPAS) shows a compositional bias: polar residues. Residues 1–26 (MFVSTAFAQTATESQPASTAGEHGAA) are disordered. The helical transmembrane segment at 56–78 (SQVLWLAITFGLFYLFLSRVVLP) threads the bilayer.

It belongs to the ATPase B chain family. As to quaternary structure, F-type ATPases have 2 components, F(1) - the catalytic core - and F(0) - the membrane proton channel. F(1) has five subunits: alpha(3), beta(3), gamma(1), delta(1), epsilon(1). F(0) has three main subunits: a(1), b(2) and c(10-14). The alpha and beta chains form an alternating ring which encloses part of the gamma chain. F(1) is attached to F(0) by a central stalk formed by the gamma and epsilon chains, while a peripheral stalk is formed by the delta and b chains.

It is found in the cell inner membrane. In terms of biological role, f(1)F(0) ATP synthase produces ATP from ADP in the presence of a proton or sodium gradient. F-type ATPases consist of two structural domains, F(1) containing the extramembraneous catalytic core and F(0) containing the membrane proton channel, linked together by a central stalk and a peripheral stalk. During catalysis, ATP synthesis in the catalytic domain of F(1) is coupled via a rotary mechanism of the central stalk subunits to proton translocation. Component of the F(0) channel, it forms part of the peripheral stalk, linking F(1) to F(0). This chain is ATP synthase subunit b, found in Brucella melitensis biotype 1 (strain ATCC 23456 / CCUG 17765 / NCTC 10094 / 16M).